The following is a 153-amino-acid chain: Ribosome maturation factor RimP (153 aa).

The protein belongs to the RimP family.

It is found in the cytoplasm. In terms of biological role, required for maturation of 30S ribosomal subunits. The protein is Ribosome maturation factor RimP of Coxiella burnetii (strain CbuK_Q154) (Coxiella burnetii (strain Q154)).